The chain runs to 241 residues: Uridylate kinase (241 aa).

15 to 18 (KLSG) contributes to the ATP binding site. The tract at residues 23–28 (GSEGFG) is involved in allosteric activation by GTP. Glycine 57 provides a ligand contact to UMP. The ATP site is built by glycine 58 and arginine 62. UMP is bound by residues aspartate 77 and 138 to 145 (TGNPFFTT). Residues threonine 165, phenylalanine 171, and aspartate 174 each contribute to the ATP site.

The protein belongs to the UMP kinase family. As to quaternary structure, homohexamer.

The protein resides in the cytoplasm. It carries out the reaction UMP + ATP = UDP + ADP. The protein operates within pyrimidine metabolism; CTP biosynthesis via de novo pathway; UDP from UMP (UMPK route): step 1/1. Allosterically activated by GTP. Inhibited by UTP. Functionally, catalyzes the reversible phosphorylation of UMP to UDP. The protein is Uridylate kinase of Klebsiella pneumoniae subsp. pneumoniae (strain ATCC 700721 / MGH 78578).